A 190-amino-acid chain; its full sequence is Segregation and condensation protein B (190 aa).

It belongs to the ScpB family. Homodimer. Homodimerization may be required to stabilize the binding of ScpA to the Smc head domains. Component of a cohesin-like complex composed of ScpA, ScpB and the Smc homodimer, in which ScpA and ScpB bind to the head domain of Smc. The presence of the three proteins is required for the association of the complex with DNA.

It localises to the cytoplasm. Its function is as follows. Participates in chromosomal partition during cell division. May act via the formation of a condensin-like complex containing Smc and ScpA that pull DNA away from mid-cell into both cell halves. This is Segregation and condensation protein B from Bacillus cereus (strain AH187).